The primary structure comprises 481 residues: Probable glycine dehydrogenase (decarboxylating) subunit 2 (481 aa).

Residues 1–26 (MVIFEKTRGKNSPSVMPSKKGDVSNI) are disordered. Lysine 263 bears the N6-(pyridoxal phosphate)lysine mark.

The protein belongs to the GcvP family. C-terminal subunit subfamily. As to quaternary structure, the glycine cleavage system is composed of four proteins: P, T, L and H. In this organism, the P 'protein' is a heterodimer of two subunits. It depends on pyridoxal 5'-phosphate as a cofactor.

The enzyme catalyses N(6)-[(R)-lipoyl]-L-lysyl-[glycine-cleavage complex H protein] + glycine + H(+) = N(6)-[(R)-S(8)-aminomethyldihydrolipoyl]-L-lysyl-[glycine-cleavage complex H protein] + CO2. In terms of biological role, the glycine cleavage system catalyzes the degradation of glycine. The P protein binds the alpha-amino group of glycine through its pyridoxal phosphate cofactor; CO(2) is released and the remaining methylamine moiety is then transferred to the lipoamide cofactor of the H protein. The sequence is that of Probable glycine dehydrogenase (decarboxylating) subunit 2 from Francisella tularensis subsp. mediasiatica (strain FSC147).